Consider the following 336-residue polypeptide: Tyrosine phosphatase-like protein H1 (336 aa).

The Tyrosine-protein phosphatase domain occupies 27 to 295; it reads IKKEHHKLMK…EICYRVLCEA (269 aa).

The protein belongs to the protein-tyrosine phosphatase family.

In Microplitis demolitor (Parasitoid wasp), this protein is Tyrosine phosphatase-like protein H1 (H1).